Consider the following 126-residue polypeptide: 5-hydroxyisourate hydrolase (126 aa).

3 residues coordinate substrate: His-16, Arg-54, and Tyr-123.

It belongs to the transthyretin family. 5-hydroxyisourate hydrolase subfamily. Homotetramer.

The enzyme catalyses 5-hydroxyisourate + H2O = 5-hydroxy-2-oxo-4-ureido-2,5-dihydro-1H-imidazole-5-carboxylate + H(+). Catalyzes the hydrolysis of 5-hydroxyisourate (HIU) to 2-oxo-4-hydroxy-4-carboxy-5-ureidoimidazoline (OHCU). The polypeptide is 5-hydroxyisourate hydrolase (Pseudomonas aeruginosa (strain ATCC 15692 / DSM 22644 / CIP 104116 / JCM 14847 / LMG 12228 / 1C / PRS 101 / PAO1)).